A 372-amino-acid polypeptide reads, in one-letter code: Alanine racemase (372 aa).

Catalysis depends on Lys-36, which acts as the Proton acceptor; specific for D-alanine. Residue Lys-36 is modified to N6-(pyridoxal phosphate)lysine. Substrate is bound at residue Arg-134. The active-site Proton acceptor; specific for L-alanine is the Tyr-266. Met-314 lines the substrate pocket.

Belongs to the alanine racemase family. The cofactor is pyridoxal 5'-phosphate.

The catalysed reaction is L-alanine = D-alanine. It functions in the pathway amino-acid biosynthesis; D-alanine biosynthesis; D-alanine from L-alanine: step 1/1. Catalyzes the interconversion of L-alanine and D-alanine. May also act on other amino acids. In Nitratidesulfovibrio vulgaris (strain DSM 19637 / Miyazaki F) (Desulfovibrio vulgaris), this protein is Alanine racemase (alr).